Consider the following 78-residue polypeptide: Large ribosomal subunit protein bL28 (78 aa).

It belongs to the bacterial ribosomal protein bL28 family.

In Thioalkalivibrio sulfidiphilus (strain HL-EbGR7), this protein is Large ribosomal subunit protein bL28.